The chain runs to 513 residues: Activin receptor type-2A (513 aa).

The N-terminal stretch at 1–19 is a signal peptide; that stretch reads MGAAAKLAFAVFLISCSSG. Residues 20-135 lie on the Extracellular side of the membrane; it reads AILGRSETQE…TSNPVTPKPP (116 aa). 5 disulfides stabilise this stretch: Cys-30–Cys-60, Cys-50–Cys-78, Cys-85–Cys-104, Cys-91–Cys-103, and Cys-105–Cys-110. 2 N-linked (GlcNAc...) asparagine glycosylation sites follow: Asn-43 and Asn-66. Residues 136-161 traverse the membrane as a helical segment; the sequence is YYNILLYSLVPLMLIAGIVICAFWVY. The Cytoplasmic segment spans residues 162 to 513; the sequence is RHHKMAYPPV…VDFPPKESSL (352 aa). In terms of domain architecture, Protein kinase spans 192-485; sequence LQLLEVKARG…GERITQMQRL (294 aa). Residues 198–206 and Lys-219 each bind ATP; that span reads KARGRFGCV. Asp-322 (proton acceptor) is an active-site residue.

This sequence belongs to the protein kinase superfamily. TKL Ser/Thr protein kinase family. TGFB receptor subfamily. Part of a complex consisting of MAGI2/ARIP1, ACVR2A, ACVR1B and SMAD3. Interacts with MAGI2/ARIP1. Interacts with type I receptor ACVR1. Interacts with BMP7. Interacts with TSC22D1/TSC-22. Interacts with activin A/INHBA. Requires Mg(2+) as cofactor. Mn(2+) is required as a cofactor.

Its subcellular location is the cell membrane. It carries out the reaction L-threonyl-[receptor-protein] + ATP = O-phospho-L-threonyl-[receptor-protein] + ADP + H(+). It catalyses the reaction L-seryl-[receptor-protein] + ATP = O-phospho-L-seryl-[receptor-protein] + ADP + H(+). Functionally, on ligand binding, forms a receptor complex consisting of two type II and two type I transmembrane serine/threonine kinases. Type II receptors phosphorylate and activate type I receptors which autophosphorylate, then bind and activate SMAD transcriptional regulators. Receptor for activin A, activin B and inhibin A. Mediates induction of adipogenesis by GDF6. The polypeptide is Activin receptor type-2A (ACVR2A) (Bos taurus (Bovine)).